A 481-amino-acid chain; its full sequence is MTTALTEQNAQQAATAGRVVRVIGAVVDVEFPRGELPALYNALTAEVTLESVAKTVVLEVAQHLGDNLIRTIAMAPTDGMVRGATVTDTGKPISVPVGDVVKGHVFNALGDCLDVPGLGRDGEQWGIHREPPSFDQLEGKTEILETGIKVIDLLTPYVKGGKIGLFGGAGVGKTVLIQEMITRIAREFSGTSVFAGVGERTREGTDLFLEMEEMGVLQDTALVFGQMDEPPGVRMRVALSGLTMAEYFRDVQNQDVLLFIDNIFRFTQAGSEVSTLLGRMPSAVGYQPTLADEMGVLQERITSTKGRSITSLQAVYVPADDYTDPAPATTFAHLDATTELDRSIASKGIYPAVNPLTSTSRILEPSIVGERHYEVSQRVIGILQKNKELQDIIAILGMDELSEEDKITVARARRLERFLGQNFFVAEKFTGLPGSYVPLADTIDAFERICNGDFDHYPEQAFNGLGGLDDVEAAYKKLTGK.

Gly-167–Thr-174 provides a ligand contact to ATP.

Belongs to the ATPase alpha/beta chains family. As to quaternary structure, F-type ATPases have 2 components, CF(1) - the catalytic core - and CF(0) - the membrane proton channel. CF(1) has five subunits: alpha(3), beta(3), gamma(1), delta(1), epsilon(1). CF(0) has three main subunits: a(1), b(2) and c(9-12). The alpha and beta chains form an alternating ring which encloses part of the gamma chain. CF(1) is attached to CF(0) by a central stalk formed by the gamma and epsilon chains, while a peripheral stalk is formed by the delta and b chains.

It is found in the cell membrane. The enzyme catalyses ATP + H2O + 4 H(+)(in) = ADP + phosphate + 5 H(+)(out). Produces ATP from ADP in the presence of a proton gradient across the membrane. The catalytic sites are hosted primarily by the beta subunits. This Corynebacterium efficiens (strain DSM 44549 / YS-314 / AJ 12310 / JCM 11189 / NBRC 100395) protein is ATP synthase subunit beta.